Reading from the N-terminus, the 101-residue chain is MMLEHVLVLSAYLFSIGIYGLITSRNMVRALMCLELILNAVNINLVTFSDLFDSRQLKGDIFSIFVIAIAAAEAAIGPAIVSSIYRNRKSTRINQSNLLNK.

Helical transmembrane passes span 2-22 (MLEHVLVLSAYLFSIGIYGLI), 32-52 (MCLELILNAVNINLVTFSDLF), and 61-81 (IFSIFVIAIAAAEAAIGPAIV).

It belongs to the complex I subunit 4L family. As to quaternary structure, NDH is composed of at least 16 different subunits, 5 of which are encoded in the nucleus.

The protein resides in the plastid. It is found in the chloroplast thylakoid membrane. The enzyme catalyses a plastoquinone + NADH + (n+1) H(+)(in) = a plastoquinol + NAD(+) + n H(+)(out). The catalysed reaction is a plastoquinone + NADPH + (n+1) H(+)(in) = a plastoquinol + NADP(+) + n H(+)(out). In terms of biological role, NDH shuttles electrons from NAD(P)H:plastoquinone, via FMN and iron-sulfur (Fe-S) centers, to quinones in the photosynthetic chain and possibly in a chloroplast respiratory chain. The immediate electron acceptor for the enzyme in this species is believed to be plastoquinone. Couples the redox reaction to proton translocation, and thus conserves the redox energy in a proton gradient. The chain is NAD(P)H-quinone oxidoreductase subunit 4L, chloroplastic from Illicium oligandrum (Star anise).